A 159-amino-acid chain; its full sequence is GDP-mannose mannosyl hydrolase (159 aa).

Residues 2 to 3 (FL), phenylalanine 8, and arginine 36 each bind substrate. The Nudix hydrolase domain occupies 13–153 (RSTPLVSLDF…SRAYFLAEKR (141 aa)). The Mg(2+) site is built by glycine 49, glutamate 69, and glutamine 122. The Nudix box signature appears at 50–71 (GRVQKDETLEAAFERLTMAELG).

In terms of assembly, homodimer. Mg(2+) serves as cofactor.

The enzyme catalyses GDP-alpha-D-mannose + H2O = D-mannose + GDP + H(+). Functionally, hydrolyzes both GDP-mannose and GDP-glucose. Could participate in the regulation of cell wall biosynthesis by influencing the concentration of GDP-mannose or GDP-glucose in the cell. Might also be involved in the biosynthesis of the slime polysaccharide colanic acid. The protein is GDP-mannose mannosyl hydrolase of Escherichia coli (strain K12).